The primary structure comprises 156 residues: Small ribosomal subunit protein uS7 (156 aa).

This sequence belongs to the universal ribosomal protein uS7 family. In terms of assembly, part of the 30S ribosomal subunit. Contacts proteins S9 and S11.

Functionally, one of the primary rRNA binding proteins, it binds directly to 16S rRNA where it nucleates assembly of the head domain of the 30S subunit. Is located at the subunit interface close to the decoding center, probably blocks exit of the E-site tRNA. This Deinococcus geothermalis (strain DSM 11300 / CIP 105573 / AG-3a) protein is Small ribosomal subunit protein uS7.